Consider the following 270-residue polypeptide: Phosphatidylglycerol--prolipoprotein diacylglyceryl transferase (270 aa).

A run of 7 helical transmembrane segments spans residues 14 to 34 (VIFE…LLGF), 60 to 80 (LLFN…VLFY), 95 to 115 (VWEG…AMLI), 128 to 148 (ADFV…GNFI), 176 to 196 (SQLY…NWYI), 202 to 222 (IGAT…IVEF), and 238 to 258 (ISMG…IMLV). An a 1,2-diacyl-sn-glycero-3-phospho-(1'-sn-glycerol)-binding site is contributed by Arg-143.

Belongs to the Lgt family.

It localises to the cell inner membrane. The enzyme catalyses L-cysteinyl-[prolipoprotein] + a 1,2-diacyl-sn-glycero-3-phospho-(1'-sn-glycerol) = an S-1,2-diacyl-sn-glyceryl-L-cysteinyl-[prolipoprotein] + sn-glycerol 1-phosphate + H(+). It functions in the pathway protein modification; lipoprotein biosynthesis (diacylglyceryl transfer). Functionally, catalyzes the transfer of the diacylglyceryl group from phosphatidylglycerol to the sulfhydryl group of the N-terminal cysteine of a prolipoprotein, the first step in the formation of mature lipoproteins. The polypeptide is Phosphatidylglycerol--prolipoprotein diacylglyceryl transferase (Pasteurella multocida (strain Pm70)).